A 393-amino-acid polypeptide reads, in one-letter code: Xyloside xylosyltransferase 1 (393 aa).

Residues 1–23 are Cytoplasmic-facing; sequence MGLLRGGLPCARAMARLGAVRSH. Residues 24-44 form a helical; Signal-anchor for type II membrane protein membrane-spanning segment; the sequence is YCALLLAAALAVCAFYYLGSG. Over 45 to 393 the chain is Lumenal; that stretch reads RETFSSATKR…GNCNTPIPED (349 aa). UDP-alpha-D-xylose is bound at residue 104–106; it reads MFT. Mn(2+) is bound at residue aspartate 226. Leucine 227 lines the UDP-alpha-D-xylose pocket. Position 228 (aspartate 228) interacts with Mn(2+). Positions 263–266 are interaction with target proteins; sequence HTFW. UDP-alpha-D-xylose is bound by residues serine 290, leucine 328, and glutamine 331. 2 residues coordinate a glycoprotein: glutamine 331 and tryptophan 360. 2 disulfides stabilise this stretch: cysteine 350–cysteine 375 and cysteine 357–cysteine 386. Residue histidine 383 coordinates Mn(2+). An a glycoprotein-binding site is contributed by asparagine 385.

It belongs to the glycosyltransferase 8 family. Homodimer. Dimer formation may be essential for the retention in endoplasmic reticulum. Requires Mg(2+) as cofactor. It depends on Mn(2+) as a cofactor.

The protein localises to the endoplasmic reticulum membrane. It catalyses the reaction 3-O-[alpha-D-xylosyl-(1-&gt;3)-beta-D-glucosyl]-L-seryl-[EGF-like domain protein] + UDP-alpha-D-xylose = 3-O-[alpha-D-xylosyl-(1-&gt;3)-alpha-D-xylosyl-(1-&gt;3)-beta-D-glucosyl]-L-seryl-[EGF-like domain protein] + UDP + H(+). Alpha-1,3-xylosyltransferase, which elongates the O-linked xylose-glucose disaccharide attached to EGF-like repeats in the extracellular domain of target proteins by catalyzing the addition of the second xylose. Known targets include Notch proteins and coagulation factors, such as F9. The protein is Xyloside xylosyltransferase 1 (XXYLT1) of Homo sapiens (Human).